Reading from the N-terminus, the 1004-residue chain is Translation initiation factor IF-2 (1004 aa).

The disordered stretch occupies residues 36-393 (SSTIEPPVVK…RQKRNEYESM (358 aa)). Composition is skewed to low complexity over residues 62–157 (AAKP…AKPA) and 173–183 (AAKPGAEAPRP). Composition is skewed to pro residues over residues 184–196 (GGMPRPMGKPAPK) and 219–236 (PRPGGGPRPGGGPRPGGG). Composition is skewed to gly residues over residues 237 to 249 (PRPQGQGRPGGQR) and 261 to 277 (GNRGGQRQGAGAGGPRP). The span at 279–303 (GGPRPQGGSRPQGGSAQGAQGAPSQ) shows a compositional bias: low complexity. Residues 330–373 (GKGGRGGQAGGGAGGGFNRGGGTGGGAGRGGRRGGTAGAFGRPG) show a composition bias toward gly residues. Over residues 377 to 386 (RRGRKSKRQK) the composition is skewed to basic residues. The tr-type G domain occupies 499–671 (KRPPVVTVMG…VCLTADAELD (173 aa)). The tract at residues 508–515 (GHVDHGKT) is G1. GTP is bound at residue 508 to 515 (GHVDHGKT). The interval 533 to 537 (GITQG) is G2. The G3 stretch occupies residues 558–561 (DTPG). GTP contacts are provided by residues 558 to 562 (DTPGH) and 612 to 615 (NKID). The interval 612 to 615 (NKID) is G4. Residues 648–650 (SAK) are G5.

Belongs to the TRAFAC class translation factor GTPase superfamily. Classic translation factor GTPase family. IF-2 subfamily.

It localises to the cytoplasm. Its function is as follows. One of the essential components for the initiation of protein synthesis. Protects formylmethionyl-tRNA from spontaneous hydrolysis and promotes its binding to the 30S ribosomal subunits. Also involved in the hydrolysis of GTP during the formation of the 70S ribosomal complex. In Corynebacterium glutamicum (strain ATCC 13032 / DSM 20300 / JCM 1318 / BCRC 11384 / CCUG 27702 / LMG 3730 / NBRC 12168 / NCIMB 10025 / NRRL B-2784 / 534), this protein is Translation initiation factor IF-2.